Reading from the N-terminus, the 612-residue chain is DNA damage checkpoint protein 1 (612 aa).

Residue Ser436 is modified to Phosphoserine. The disordered stretch occupies residues 576–612; it reads GLLNSQNDTSNHKKQDNKEMEDGLGLTQVEKPRGIFD. Positions 585 to 596 are enriched in basic and acidic residues; that stretch reads SNHKKQDNKEME.

It belongs to the DDC1 family. Component of the checkpoint clamp complex composed of DDC1, MEC3 and RAD17. The interaction with MEC3 is performed in a RAD17-dependent manner. The checkpoint clamp complex loads onto DNA in an ATP-dependent manner through its interaction with the RFC-RAD4 checkpoint clamp loader complex. Interacts with the DNA polymerase zeta subunit REV7 and DPB11. In terms of processing, phosphorylated during cell cycle S-phase and in response to DNA damage. This phosphorylation is MEC14 dependent. Also hosphorylated by CDC28.

It is found in the cytoplasm. Its subcellular location is the nucleus. Functionally, component of the checkpoint clamp complex involved in the surveillance mechanism that allows the DNA repair pathways to act to restore the integrity of the DNA prior to DNA synthesis or separation of the replicated chromosomes. Associates with sites of DNA damage and modulates the MEC1 signaling pathway and the activation of RAD53 in response to DNA damage at phase G1. The complex also physically regulates DNA polymerase zeta-dependent mutagenesis by controlling the access of polymerase zeta to damaged DNA. The sequence is that of DNA damage checkpoint protein 1 (DDC1) from Saccharomyces cerevisiae (strain ATCC 204508 / S288c) (Baker's yeast).